A 689-amino-acid chain; its full sequence is DNA ligase (689 aa).

NAD(+)-binding positions include 40–44 (DQEYD), 89–90 (SL), and glutamate 122. The active-site N6-AMP-lysine intermediate is the lysine 124. Arginine 145, glutamate 182, lysine 300, and lysine 325 together coordinate NAD(+). 4 residues coordinate Zn(2+): cysteine 419, cysteine 422, cysteine 437, and cysteine 442. Positions 600 to 689 (QADGVLTGAT…SADASADASA (90 aa)) constitute a BRCT domain.

It belongs to the NAD-dependent DNA ligase family. LigA subfamily. It depends on Mg(2+) as a cofactor. Mn(2+) serves as cofactor.

It carries out the reaction NAD(+) + (deoxyribonucleotide)n-3'-hydroxyl + 5'-phospho-(deoxyribonucleotide)m = (deoxyribonucleotide)n+m + AMP + beta-nicotinamide D-nucleotide.. Its function is as follows. DNA ligase that catalyzes the formation of phosphodiester linkages between 5'-phosphoryl and 3'-hydroxyl groups in double-stranded DNA using NAD as a coenzyme and as the energy source for the reaction. It is essential for DNA replication and repair of damaged DNA. This Gemmatimonas aurantiaca (strain DSM 14586 / JCM 11422 / NBRC 100505 / T-27) protein is DNA ligase.